The primary structure comprises 98 residues: MSMVYFNIFMAFTVSFVGLLMYRSHLMSSLLCLEGMMLSLFVMMSMTILNNHFTLANMAPIILLVFAACEAALGLSLLVMVSNTYGTDYVQNLNLLQC.

The next 3 helical transmembrane spans lie at 1 to 21, 29 to 49, and 61 to 81; these read MSMV…GLLM, SLLC…MTIL, and IILL…LVMV.

The protein belongs to the complex I subunit 4L family. Core subunit of respiratory chain NADH dehydrogenase (Complex I) which is composed of 45 different subunits.

Its subcellular location is the mitochondrion inner membrane. It catalyses the reaction a ubiquinone + NADH + 5 H(+)(in) = a ubiquinol + NAD(+) + 4 H(+)(out). Core subunit of the mitochondrial membrane respiratory chain NADH dehydrogenase (Complex I) which catalyzes electron transfer from NADH through the respiratory chain, using ubiquinone as an electron acceptor. Part of the enzyme membrane arm which is embedded in the lipid bilayer and involved in proton translocation. The protein is NADH-ubiquinone oxidoreductase chain 4L (MT-ND4L) of Phocarctos hookeri (Hooker's sea lion).